Reading from the N-terminus, the 186-residue chain is ADP-ribosylation factor-like protein alp41 (186 aa).

Gly-2 carries N-myristoyl glycine lipidation. GTP contacts are provided by residues 23–30 (GLDNAGKT), 66–70 (DIGGQ), and 125–128 (NKSD).

This sequence belongs to the small GTPase superfamily. Arf family.

It localises to the cytoplasm. It is found in the cytoskeleton. Functionally, has a role in the cofactor-dependent pathway of microtubule biogenesis. Required for growth polarity control. In Schizosaccharomyces pombe (strain 972 / ATCC 24843) (Fission yeast), this protein is ADP-ribosylation factor-like protein alp41 (alp41).